The following is a 77-amino-acid chain: U8-lycotoxin-Ls1r (77 aa).

Positions 1–20 are cleaved as a signal peptide; sequence MKLIIFTGLVLFAIVSLIEA. A propeptide spanning residues 21-26 is cleaved from the precursor; that stretch reads QAENEK.

Belongs to the neurotoxin 19 (CSTX) family. 08 (U8-Lctx) subfamily. In terms of processing, contains 4 disulfide bonds. In terms of tissue distribution, expressed by the venom gland.

Its subcellular location is the secreted. This chain is U8-lycotoxin-Ls1r, found in Lycosa singoriensis (Wolf spider).